Reading from the N-terminus, the 244-residue chain is Thiol S-methyltransferase TMT1A (244 aa).

The segment at 1 to 28 is targeting to lipid droplets; the sequence is MELTIFILRLAIYILTFPLYLLNFLGLW. Residues 1-29 form the signal peptide; sequence MELTIFILRLAIYILTFPLYLLNFLGLWS.

It belongs to the methyltransferase superfamily. As to quaternary structure, (Microbial infection) Interacts with HCV non-structural protein 4B/NS4B (via C-terminal region); this interaction may promote the recruitment of NS4B in the proximity of lipid droplet. In terms of assembly, self-associates. Interacts with SNRNP200; this interaction may promote the odontogenic differentiation. Methylated at lysine residues most likely by EZH2. In terms of tissue distribution, expressed in the liver.

The protein resides in the lipid droplet. It localises to the endoplasmic reticulum. The protein localises to the membrane. Its subcellular location is the microsome. It is found in the cytoplasm. The protein resides in the cytosol. It catalyses the reaction a thiol + S-adenosyl-L-methionine = a methyl thioether + S-adenosyl-L-homocysteine + H(+). The enzyme catalyses an adenosine in mRNA + S-adenosyl-L-methionine = an N(6)-methyladenosine in mRNA + S-adenosyl-L-homocysteine + H(+). Inhibited by 2,3-dichloro-alpha-methylbenzylamine (DCMB). Thiol S-methyltransferase that catalyzes the transfer of a methyl group from S-adenosyl-L-methionine to alkyl and phenolic thiol-containing acceptor substrates. Together with TMT1B accounts for most of S-thiol methylation activity in the endoplasmic reticulum of hepatocytes. Able to methylate the N6 position of adenosine residues in long non-coding RNAs (lncRNAs). May facilitate lncRNAs transfer into exosomes at the tumor-stroma interface. Promotes osteogenic and odontogenic differentiation by regulating the expression of genes involved in stem cell differentiation and survival. Targeted from the endoplasmic reticulum to lipid droplets, where it recruits cellular proteins to form functional organelles. Its function is as follows. (Microbial infection) May be involved in the assembly and release stages of hepatitis C virus (HCV) life cycle and thus play a crucial role in HCV propagation. The chain is Thiol S-methyltransferase TMT1A from Homo sapiens (Human).